We begin with the raw amino-acid sequence, 270 residues long: 3-methyl-2-oxobutanoate hydroxymethyltransferase (270 aa).

Mg(2+) contacts are provided by Asp41 and Asp80. Residues 41-42 (DS), Asp80, and Lys109 contribute to the 3-methyl-2-oxobutanoate site. Glu111 lines the Mg(2+) pocket. Glu178 functions as the Proton acceptor in the catalytic mechanism.

It belongs to the PanB family. Homodecamer; pentamer of dimers. Mg(2+) serves as cofactor.

It localises to the cytoplasm. The catalysed reaction is 3-methyl-2-oxobutanoate + (6R)-5,10-methylene-5,6,7,8-tetrahydrofolate + H2O = 2-dehydropantoate + (6S)-5,6,7,8-tetrahydrofolate. The protein operates within cofactor biosynthesis; (R)-pantothenate biosynthesis; (R)-pantoate from 3-methyl-2-oxobutanoate: step 1/2. Catalyzes the reversible reaction in which hydroxymethyl group from 5,10-methylenetetrahydrofolate is transferred onto alpha-ketoisovalerate to form ketopantoate. The polypeptide is 3-methyl-2-oxobutanoate hydroxymethyltransferase (Thermotoga neapolitana (strain ATCC 49049 / DSM 4359 / NBRC 107923 / NS-E)).